The sequence spans 155 residues: 3-dehydroquinate dehydratase (155 aa).

Tyr-32 serves as the catalytic Proton acceptor. The substrate site is built by Asn-84, His-90, and Asp-97. His-110 functions as the Proton donor in the catalytic mechanism. Substrate-binding positions include 111 to 112 (LS) and Arg-121.

Belongs to the type-II 3-dehydroquinase family. Homododecamer.

The enzyme catalyses 3-dehydroquinate = 3-dehydroshikimate + H2O. It participates in metabolic intermediate biosynthesis; chorismate biosynthesis; chorismate from D-erythrose 4-phosphate and phosphoenolpyruvate: step 3/7. Catalyzes a trans-dehydration via an enolate intermediate. This chain is 3-dehydroquinate dehydratase, found in Ralstonia pickettii (strain 12J).